Consider the following 336-residue polypeptide: Meiotic drive suppressor wtf23 (336 aa).

2 disordered regions span residues 1-21 (MKNN…LKTG) and 35-68 (DSEE…GTTD). Helical transmembrane passes span 73 to 93 (FLIK…LAVW), 110 to 130 (WTLF…LTYF), 140 to 160 (VTVI…AQCV), 169 to 189 (EMMI…FGCV), 206 to 226 (TISA…WTLW), 228 to 248 (ALSG…LVNG), and 261 to 281 (GYEI…LYEM).

This sequence belongs to the WTF family. Homomer. Interacts with other proteins that exhibit high sequence similarity.

Its subcellular location is the spore membrane. It localises to the vacuole membrane. Its function is as follows. Acts as a suppressor component of the dual wtf meiotic drive system, and can suppress but not confer meiotic drive by compatible poisons. Wtf meiotic drive systems promote unequal transmission of alleles from the parental zygote to progeny spores by encoding a poison and an antidote from the same locus; the poison is trans-acting and forms toxic aggregates in all spores within an ascus, wherease the antidote is spore-specific and targets aggregates for degradation by the vacuole. Meiotic drive by wtf systems therefore lead to poisoning of all progeny that do not inherit the dual poison/antidote allele, or express a compatible antidote. This is Meiotic drive suppressor wtf23 from Schizosaccharomyces kambucha (Fission yeast).